A 341-amino-acid polypeptide reads, in one-letter code: Queuosine 5'-phosphate N-glycosylase/hydrolase (341 aa).

Residue methionine 1 is modified to N-acetylmethionine. 6 residues coordinate queuine: histidine 53, phenylalanine 237, aspartate 239, aspartate 314, tyrosine 315, and aspartate 319. Aspartate 239 serves as the catalytic Nucleophile or transition state stabilizer.

This sequence belongs to the QNG1 protein family.

It catalyses the reaction queuosine 5'-phosphate + H2O = queuine + D-ribose 5-phosphate. Functionally, catalyzes the hydrolysis of queuosine 5'-phosphate, releasing the nucleobase queuine (q). Is required for salvage of queuine from exogenous queuosine (Q) that is imported and then converted to queuosine 5'-phosphate intracellularly. The polypeptide is Queuosine 5'-phosphate N-glycosylase/hydrolase (Bos taurus (Bovine)).